We begin with the raw amino-acid sequence, 396 residues long: Proteasome-activating nucleotidase (396 aa).

Residues 16 to 57 (ITYLKRRIRQLELQVRMLEADKERLERELSRLRSEMSRLRQP) adopt a coiled-coil conformation. ATP-binding positions include 181-186 (GCGKTL) and H320. Positions 394-396 (IYG) are docks into pockets in the proteasome alpha-ring to cause gate opening.

The protein belongs to the AAA ATPase family. In terms of assembly, homohexamer. The hexameric complex has a two-ring architecture resembling a top hat that caps the 20S proteasome core at one or both ends. Upon ATP-binding, the C-terminus of PAN interacts with the alpha-rings of the proteasome core by binding to the intersubunit pockets.

It localises to the cytoplasm. In terms of biological role, ATPase which is responsible for recognizing, binding, unfolding and translocation of substrate proteins into the archaeal 20S proteasome core particle. Is essential for opening the gate of the 20S proteasome via an interaction with its C-terminus, thereby allowing substrate entry and access to the site of proteolysis. Thus, the C-termini of the proteasomal ATPase function like a 'key in a lock' to induce gate opening and therefore regulate proteolysis. Unfolding activity requires energy from ATP hydrolysis, whereas ATP binding alone promotes ATPase-20S proteasome association which triggers gate opening, and supports translocation of unfolded substrates. This is Proteasome-activating nucleotidase from Pyrococcus abyssi (strain GE5 / Orsay).